The chain runs to 308 residues: Cytochrome b (308 aa).

The next 4 helical transmembrane spans lie at 1-21, 45-66, 81-101, and 146-166; these read FGLL…LLAA, WLIR…YLHI, WNIG…GYVL, and FFAL…VHLT. Heme b-binding residues include His51 and His65. Heme b-binding residues include His150 and His164. His169 serves as a coordination point for a ubiquinone. The next 3 membrane-spanning stretches (helical) occupy residues 194–214, 256–276, and 288–308; these read TKDM…ALFS, LGGV…PLLH, and LSQI…WVGS.

Belongs to the cytochrome b family. As to quaternary structure, the cytochrome bc1 complex contains 11 subunits: 3 respiratory subunits (MT-CYB, CYC1 and UQCRFS1), 2 core proteins (UQCRC1 and UQCRC2) and 6 low-molecular weight proteins (UQCRH/QCR6, UQCRB/QCR7, UQCRQ/QCR8, UQCR10/QCR9, UQCR11/QCR10 and a cleavage product of UQCRFS1). This cytochrome bc1 complex then forms a dimer. The cofactor is heme b.

It localises to the mitochondrion inner membrane. In terms of biological role, component of the ubiquinol-cytochrome c reductase complex (complex III or cytochrome b-c1 complex) that is part of the mitochondrial respiratory chain. The b-c1 complex mediates electron transfer from ubiquinol to cytochrome c. Contributes to the generation of a proton gradient across the mitochondrial membrane that is then used for ATP synthesis. The protein is Cytochrome b (MT-CYB) of Pomatostomus temporalis (Grey-crowned babbler).